A 702-amino-acid chain; its full sequence is MQTVLFLAALVSLAAAGYPQYHYDVETRKLDPSLLNIQTKVLSLLENWKQVNPDDEYYKIGKEYNVEANMESYTNREVVTEFLSLYKAGFIPKNEVFSIFYENQALEVIALYRLFYYAKDFETFYKTAAFARVWLNEGQFVYAFYLAVIHRADTRGIVLPAPYEIWPEYFMNSDVLSKIYRIQMQKGLIIPEQGPYYGILSKDNAYYFYANYSGPLTYEDNENLLSYFIEDIGWNSYYYYFHNRFPFWENGEQLIGPLKERRGEIYYYVYQKILARYYLERLANGLGEIPRFNWLDKYQTSYYPLLSSYQLPFAQRNDDYYLASGDNINDIQFIDTYEKTFLQLLQKGQFKAYKQEVDLYNSKSINFVGNYWQSNADLYEKVPKRNYWRSYEATARRVLGAAPRSSINYENMNIPTALDFYQTSLRDPAFYQLYAKILDYINEYKEYLEPYSQDVLHYVGVKINDVKVDKLVTYFEYFDWNATNAVYLSEQQLDTVSPSYIVRQPRLNNKPFTVNIDIKSDVESEVVVKIFLGPKYDGNGLPISLEDNWINFIELDWFTHKLTSGQNKIARKSEEFFFFKDDSVSLFKIYELLSNGQVPSYMVDRYIYLPRRLILPRGTQRGFPLQLFVVVYPYQAPVKEWESMRQYIVDNKPFGYPFDRPVTLPYYFNQPNMYFKDVYVYQEGEQYPYYNSYWSQNQVSNH.

Residues 1–16 (MQTVLFLAALVSLAAA) form the signal peptide. 2 N-linked (GlcNAc...) asparagine glycosylation sites follow: asparagine 211 and asparagine 481.

It belongs to the hemocyanin family. As to expression, hemolymph.

Its subcellular location is the secreted. Its function is as follows. Larval storage protein (LSP) which may serve as a store of amino acids for synthesis of adult proteins. Binds the A.niger cell wall component alpha-1,3-glucan, a fungal pathogen-associated molecular pattern (PAMP) that activates the host immune response. The sequence is that of Arylphorin (LOC113516268) from Galleria mellonella (Greater wax moth).